Reading from the N-terminus, the 141-residue chain is HTH-type transcriptional repressor NsrR (141 aa).

Positions 2–129 (QLTSFTDYGL…DNYTLADLVE (128 aa)) constitute an HTH rrf2-type domain. Positions 28 to 51 (ISEVTDVYGVSRNHMVKIINQLSR) form a DNA-binding region, H-T-H motif. [2Fe-2S] cluster is bound by residues Cys91, Cys96, and Cys102.

The cofactor is [2Fe-2S] cluster.

Functionally, nitric oxide-sensitive repressor of genes involved in protecting the cell against nitrosative stress. May require iron for activity. In Escherichia coli O139:H28 (strain E24377A / ETEC), this protein is HTH-type transcriptional repressor NsrR.